Reading from the N-terminus, the 201-residue chain is Elongation factor Ts (201 aa).

An involved in Mg(2+) ion dislocation from EF-Tu region spans residues 83–86; sequence TDFV.

Belongs to the EF-Ts family.

It is found in the cytoplasm. Associates with the EF-Tu.GDP complex and induces the exchange of GDP to GTP. It remains bound to the aminoacyl-tRNA.EF-Tu.GTP complex up to the GTP hydrolysis stage on the ribosome. This Methylacidiphilum infernorum (isolate V4) (Methylokorus infernorum (strain V4)) protein is Elongation factor Ts.